The primary structure comprises 362 residues: Melatonin receptor type 1B (362 aa).

At 1–42 (MSENGSFANCCEAGGWAVRPGWSGAGSARPSRTPRPPWVAPA) the chain is on the extracellular side. N-linked (GlcNAc...) asparagine glycosylation occurs at Asn4. The chain crosses the membrane as a helical span at residues 43-63 (LSAVLIVTTAVDVVGNLLVIL). Over 64–76 (SVLRNRKLRNAGN) the chain is Cytoplasmic. Residues 77 to 97 (LFLVSLALADLVVAFYPYPLI) traverse the membrane as a helical segment. At 98-115 (LVAIFYDGWALGEEHCKA) the chain is on the extracellular side. Cysteines 113 and 190 form a disulfide. A helical membrane pass occupies residues 116-136 (SAFVMGLSVIGSVFNITAIAI). Topologically, residues 137 to 155 (NRYCYICHSMAYHRIYRRW) are cytoplasmic. Residues 156–176 (HTPLHICLIWLLTVVALLPNF) form a helical membrane-spanning segment. Asn175 and Gln194 together coordinate melatonin. Residues 177-200 (FVGSLEYDPRIYSCTFIQTASTQY) are Extracellular-facing. A helical membrane pass occupies residues 201–221 (TAAVVVIHFLLPIAVVSFCYL). The Cytoplasmic portion of the chain corresponds to 222–253 (RIWVLVLQARRKAKPESRLCLKPSDLRSFLTM). A helical membrane pass occupies residues 254–274 (FVVFVIFAICWAPLNCIGLAV). The Extracellular portion of the chain corresponds to 275 to 287 (AINPQEMAPQIPE). Residues 288-308 (GLFVTSYLLAYFNSCLNAIVY) traverse the membrane as a helical segment. Topologically, residues 309–362 (GLLNQNFRREYKRILLALWNPRHCIQDASKGSHAEGLQSPAPPIIGVQHQADAL) are cytoplasmic.

The protein belongs to the G-protein coupled receptor 1 family. As to quaternary structure, interacts with GPR61, GPR62 and GPR135. Expressed in retina and less in brain and hippocampus.

The protein resides in the cell membrane. Functionally, high affinity receptor for melatonin. Likely to mediate the reproductive and circadian actions of melatonin. The activity of this receptor is mediated by pertussis toxin sensitive G proteins that inhibit adenylate cyclase activity. The chain is Melatonin receptor type 1B (MTNR1B) from Homo sapiens (Human).